The chain runs to 240 residues: UDP-2,3-diacylglucosamine hydrolase (240 aa).

Residues aspartate 8, histidine 10, aspartate 41, asparagine 79, and histidine 114 each contribute to the Mn(2+) site. Residue 79 to 80 participates in substrate binding; that stretch reads NR. The substrate site is built by aspartate 122, serine 160, asparagine 164, lysine 167, and histidine 195. Mn(2+) contacts are provided by histidine 195 and histidine 197.

This sequence belongs to the LpxH family. The cofactor is Mn(2+).

Its subcellular location is the cell inner membrane. The enzyme catalyses UDP-2-N,3-O-bis[(3R)-3-hydroxytetradecanoyl]-alpha-D-glucosamine + H2O = 2-N,3-O-bis[(3R)-3-hydroxytetradecanoyl]-alpha-D-glucosaminyl 1-phosphate + UMP + 2 H(+). It functions in the pathway glycolipid biosynthesis; lipid IV(A) biosynthesis; lipid IV(A) from (3R)-3-hydroxytetradecanoyl-[acyl-carrier-protein] and UDP-N-acetyl-alpha-D-glucosamine: step 4/6. In terms of biological role, hydrolyzes the pyrophosphate bond of UDP-2,3-diacylglucosamine to yield 2,3-diacylglucosamine 1-phosphate (lipid X) and UMP by catalyzing the attack of water at the alpha-P atom. Involved in the biosynthesis of lipid A, a phosphorylated glycolipid that anchors the lipopolysaccharide to the outer membrane of the cell. The polypeptide is UDP-2,3-diacylglucosamine hydrolase (Salmonella dublin (strain CT_02021853)).